Reading from the N-terminus, the 125-residue chain is Ribonuclease P protein component (125 aa).

Belongs to the RnpA family. As to quaternary structure, consists of a catalytic RNA component (M1 or rnpB) and a protein subunit.

It carries out the reaction Endonucleolytic cleavage of RNA, removing 5'-extranucleotides from tRNA precursor.. RNaseP catalyzes the removal of the 5'-leader sequence from pre-tRNA to produce the mature 5'-terminus. It can also cleave other RNA substrates such as 4.5S RNA. The protein component plays an auxiliary but essential role in vivo by binding to the 5'-leader sequence and broadening the substrate specificity of the ribozyme. The chain is Ribonuclease P protein component from Rhodococcus jostii (strain RHA1).